A 250-amino-acid polypeptide reads, in one-letter code: DNA repair protein RecO (250 aa).

It belongs to the RecO family.

Functionally, involved in DNA repair and RecF pathway recombination. This chain is DNA repair protein RecO, found in Lactobacillus acidophilus (strain ATCC 700396 / NCK56 / N2 / NCFM).